We begin with the raw amino-acid sequence, 342 residues long: Holliday junction branch migration complex subunit RuvB (342 aa).

Residues 1–181 are large ATPase domain (RuvB-L); sequence MEERFLTPKD…FGMVLELEFY (181 aa). ATP contacts are provided by residues Leu-20, Arg-21, Gly-62, Lys-65, Thr-66, Thr-67, 128 to 130, Arg-171, Tyr-181, and Arg-218; that span reads EDF. Thr-66 serves as a coordination point for Mg(2+). Residues 182-252 form a small ATPAse domain (RuvB-S) region; that stretch reads TPDELKQIIK…TVEDAMKIMG (71 aa). A head domain (RuvB-H) region spans residues 255–342; it reads AEGLDDMDRK…IGPLWDSTGD (88 aa). Arg-310 and Arg-315 together coordinate DNA.

It belongs to the RuvB family. As to quaternary structure, homohexamer. Forms an RuvA(8)-RuvB(12)-Holliday junction (HJ) complex. HJ DNA is sandwiched between 2 RuvA tetramers; dsDNA enters through RuvA and exits via RuvB. An RuvB hexamer assembles on each DNA strand where it exits the tetramer. Each RuvB hexamer is contacted by two RuvA subunits (via domain III) on 2 adjacent RuvB subunits; this complex drives branch migration. In the full resolvosome a probable DNA-RuvA(4)-RuvB(12)-RuvC(2) complex forms which resolves the HJ.

Its subcellular location is the cytoplasm. It catalyses the reaction ATP + H2O = ADP + phosphate + H(+). Functionally, the RuvA-RuvB-RuvC complex processes Holliday junction (HJ) DNA during genetic recombination and DNA repair, while the RuvA-RuvB complex plays an important role in the rescue of blocked DNA replication forks via replication fork reversal (RFR). RuvA specifically binds to HJ cruciform DNA, conferring on it an open structure. The RuvB hexamer acts as an ATP-dependent pump, pulling dsDNA into and through the RuvAB complex. RuvB forms 2 homohexamers on either side of HJ DNA bound by 1 or 2 RuvA tetramers; 4 subunits per hexamer contact DNA at a time. Coordinated motions by a converter formed by DNA-disengaged RuvB subunits stimulates ATP hydrolysis and nucleotide exchange. Immobilization of the converter enables RuvB to convert the ATP-contained energy into a lever motion, pulling 2 nucleotides of DNA out of the RuvA tetramer per ATP hydrolyzed, thus driving DNA branch migration. The RuvB motors rotate together with the DNA substrate, which together with the progressing nucleotide cycle form the mechanistic basis for DNA recombination by continuous HJ branch migration. Branch migration allows RuvC to scan DNA until it finds its consensus sequence, where it cleaves and resolves cruciform DNA. The chain is Holliday junction branch migration complex subunit RuvB from Kosmotoga olearia (strain ATCC BAA-1733 / DSM 21960 / TBF 19.5.1).